Here is a 578-residue protein sequence, read N- to C-terminus: Maltogenic alpha-amylase (578 aa).

The protein belongs to the glycosyl hydrolase 13 family.

The enzyme catalyses hydrolysis of (1-&gt;4)-alpha-D-glucosidic linkages in polysaccharides so as to remove successive alpha-maltose residues from the non-reducing ends of the chains.. Functionally, converts starch into maltose. In contrary to other maltogenic alpha-amylases BlmA cannot hydrolyze 1,4-alpha-glucosidic linkage next to 1,6-alpha-glucosidic linkages. The chain is Maltogenic alpha-amylase (blmA) from Bacillus licheniformis.